A 502-amino-acid polypeptide reads, in one-letter code: Serine carboxypeptidase-like 40 (502 aa).

An N-terminal signal peptide occupies residues 1 to 24 (MRKGQGYSYSVIASVLVLLCVVVS). N-linked (GlcNAc...) asparagine glycans are attached at residues asparagine 103 and asparagine 187. 3 cysteine pairs are disulfide-bonded: cysteine 136–cysteine 384, cysteine 293–cysteine 307, and cysteine 331–cysteine 352. Serine 229 is an active-site residue. Asparagine 333 and asparagine 373 each carry an N-linked (GlcNAc...) asparagine glycan. Residue aspartate 420 is part of the active site. A glycan (N-linked (GlcNAc...) asparagine) is linked at asparagine 436. Histidine 473 is a catalytic residue.

The protein belongs to the peptidase S10 family. As to expression, expressed in roots, leaves, flowers and siliques.

It is found in the secreted. In terms of biological role, probable carboxypeptidase. In Arabidopsis thaliana (Mouse-ear cress), this protein is Serine carboxypeptidase-like 40 (SCPL40).